A 219-amino-acid polypeptide reads, in one-letter code: Transmembrane protein 179B (219 aa).

4 consecutive transmembrane segments (helical) span residues 9–29, 65–85, 96–116, and 167–187; these read VELA…AAMT, FVAG…LFWI, GAIG…LVLV, and TSSW…VVQW. The interval 198–219 is disordered; the sequence is ERGDPEWSSETDALVGSRLSHS. Ser-206 and Ser-214 each carry phosphoserine.

It belongs to the TMEM179 family.

It is found in the membrane. The polypeptide is Transmembrane protein 179B (TMEM179B) (Homo sapiens (Human)).